We begin with the raw amino-acid sequence, 257 residues long: 3-deoxy-manno-octulosonate cytidylyltransferase (257 aa).

It belongs to the KdsB family.

It is found in the cytoplasm. The catalysed reaction is 3-deoxy-alpha-D-manno-oct-2-ulosonate + CTP = CMP-3-deoxy-beta-D-manno-octulosonate + diphosphate. Its pathway is nucleotide-sugar biosynthesis; CMP-3-deoxy-D-manno-octulosonate biosynthesis; CMP-3-deoxy-D-manno-octulosonate from 3-deoxy-D-manno-octulosonate and CTP: step 1/1. It functions in the pathway bacterial outer membrane biogenesis; lipopolysaccharide biosynthesis. Its function is as follows. Activates KDO (a required 8-carbon sugar) for incorporation into bacterial lipopolysaccharide in Gram-negative bacteria. This Chromohalobacter salexigens (strain ATCC BAA-138 / DSM 3043 / CIP 106854 / NCIMB 13768 / 1H11) protein is 3-deoxy-manno-octulosonate cytidylyltransferase.